Reading from the N-terminus, the 425-residue chain is Glutamyl-tRNA reductase (425 aa).

Substrate contacts are provided by residues 49-52, serine 107, 112-114, and glutamine 118; these read TCNR and EPQ. Cysteine 50 (nucleophile) is an active-site residue. Position 187 to 192 (187 to 192) interacts with NADP(+); sequence GAGETI.

This sequence belongs to the glutamyl-tRNA reductase family. In terms of assembly, homodimer.

The catalysed reaction is (S)-4-amino-5-oxopentanoate + tRNA(Glu) + NADP(+) = L-glutamyl-tRNA(Glu) + NADPH + H(+). Its pathway is porphyrin-containing compound metabolism; protoporphyrin-IX biosynthesis; 5-aminolevulinate from L-glutamyl-tRNA(Glu): step 1/2. In terms of biological role, catalyzes the NADPH-dependent reduction of glutamyl-tRNA(Glu) to glutamate 1-semialdehyde (GSA). The chain is Glutamyl-tRNA reductase from Pseudomonas syringae pv. tomato (strain ATCC BAA-871 / DC3000).